The chain runs to 446 residues: Tubulin beta-1 chain (446 aa).

GTP contacts are provided by glutamine 13, glutamate 71, serine 140, glycine 144, threonine 145, glycine 146, asparagine 206, and asparagine 228. Glutamate 71 is a binding site for Mg(2+). The tract at residues valine 421 to glutamate 446 is disordered. Residues serine 431 to glutamate 446 show a composition bias toward acidic residues.

This sequence belongs to the tubulin family. In terms of assembly, dimer of alpha and beta chains. A typical microtubule is a hollow water-filled tube with an outer diameter of 25 nm and an inner diameter of 15 nM. Alpha-beta heterodimers associate head-to-tail to form protofilaments running lengthwise along the microtubule wall with the beta-tubulin subunit facing the microtubule plus end conferring a structural polarity. Microtubules usually have 13 protofilaments but different protofilament numbers can be found in some organisms and specialized cells. Mg(2+) serves as cofactor.

It localises to the cytoplasm. The protein resides in the cytoskeleton. Functionally, tubulin is the major constituent of microtubules, a cylinder consisting of laterally associated linear protofilaments composed of alpha- and beta-tubulin heterodimers. Microtubules grow by the addition of GTP-tubulin dimers to the microtubule end, where a stabilizing cap forms. Below the cap, tubulin dimers are in GDP-bound state, owing to GTPase activity of alpha-tubulin. The protein is Tubulin beta-1 chain (tub1) of Hypocrea rufa (Trichoderma viride).